Here is an 86-residue protein sequence, read N- to C-terminus: Small ribosomal subunit protein uS17 (86 aa).

It belongs to the universal ribosomal protein uS17 family. As to quaternary structure, part of the 30S ribosomal subunit.

One of the primary rRNA binding proteins, it binds specifically to the 5'-end of 16S ribosomal RNA. The chain is Small ribosomal subunit protein uS17 from Helicobacter acinonychis (strain Sheeba).